A 216-amino-acid polypeptide reads, in one-letter code: 7-carboxy-7-deazaguanine synthase (216 aa).

Substrate contacts are provided by residues 12–14 (LQG) and arginine 27. The Radical SAM core domain occupies 18-216 (RAGRAAVFCR…LQTHKYLGIP (199 aa)). Residues cysteine 31, cysteine 46, and cysteine 49 each coordinate [4Fe-4S] cluster. Threonine 51 serves as a coordination point for Mg(2+). Threonine 93 is a binding site for substrate. Residues glycine 95, 136 to 138 (SPK), and 176 to 179 (QPRD) contribute to the S-adenosyl-L-methionine site. Residue proline 216 participates in substrate binding.

Belongs to the radical SAM superfamily. 7-carboxy-7-deazaguanine synthase family. Homodimer. [4Fe-4S] cluster serves as cofactor. S-adenosyl-L-methionine is required as a cofactor. Requires Mg(2+) as cofactor.

It carries out the reaction 6-carboxy-5,6,7,8-tetrahydropterin + H(+) = 7-carboxy-7-deazaguanine + NH4(+). The protein operates within purine metabolism; 7-cyano-7-deazaguanine biosynthesis. In terms of biological role, catalyzes the complex heterocyclic radical-mediated conversion of 6-carboxy-5,6,7,8-tetrahydropterin (CPH4) to 7-carboxy-7-deazaguanine (CDG), a step common to the biosynthetic pathways of all 7-deazapurine-containing compounds. This chain is 7-carboxy-7-deazaguanine synthase, found in Nitratidesulfovibrio vulgaris (strain ATCC 29579 / DSM 644 / CCUG 34227 / NCIMB 8303 / VKM B-1760 / Hildenborough) (Desulfovibrio vulgaris).